The sequence spans 61 residues: MVMMKSFIVKGKFKAGSTWEKFTKKIESQNEKNATDKTYSIFGSKHGVKRSQVQIESVAEE.

The protein belongs to the eukaryotic ribosomal protein eL20 family. In terms of assembly, part of the 50S ribosomal subunit. Binds 23S rRNA.

In Methanosarcina acetivorans (strain ATCC 35395 / DSM 2834 / JCM 12185 / C2A), this protein is Large ribosomal subunit protein eL20.